We begin with the raw amino-acid sequence, 490 residues long: ATP synthase subunit beta, chloroplastic (490 aa).

Phosphothreonine is present on Thr6. Residue Ser13 is modified to Phosphoserine. ATP is bound at residue 172–179; that stretch reads GGAGVGKT.

Belongs to the ATPase alpha/beta chains family. As to quaternary structure, F-type ATPases have 2 components, CF(1) - the catalytic core - and CF(0) - the membrane proton channel. CF(1) has five subunits: alpha(3), beta(3), gamma(1), delta(1), epsilon(1). CF(0) has four main subunits: a(1), b(1), b'(1) and c(9-12).

The protein localises to the plastid. It localises to the chloroplast thylakoid membrane. The catalysed reaction is ATP + H2O + 4 H(+)(in) = ADP + phosphate + 5 H(+)(out). Produces ATP from ADP in the presence of a proton gradient across the membrane. The catalytic sites are hosted primarily by the beta subunits. This Aethionema cordifolium (Lebanon stonecress) protein is ATP synthase subunit beta, chloroplastic.